Reading from the N-terminus, the 250-residue chain is 5-oxoprolinase subunit A (250 aa).

Belongs to the LamB/PxpA family. As to quaternary structure, forms a complex composed of PxpA, PxpB and PxpC.

It catalyses the reaction 5-oxo-L-proline + ATP + 2 H2O = L-glutamate + ADP + phosphate + H(+). In terms of biological role, catalyzes the cleavage of 5-oxoproline to form L-glutamate coupled to the hydrolysis of ATP to ADP and inorganic phosphate. The polypeptide is 5-oxoprolinase subunit A (Staphylococcus aureus (strain MRSA252)).